The chain runs to 140 residues: Pro-variola growth factor (140 aa).

A signal peptide spans 1–18 (MSMKYLMLLFAAMIIRSF). Over 19-100 (ANSGNAIETT…SEKPNTTTSY (82 aa)) the chain is Extracellular. N-linked (GlcNAc...) asparagine; by host glycosylation occurs at Asn-34. An EGF-like domain is found at 41-81 (AIRLCGPEGDRYCFHGICIHARDIDGMYCRCSHGYTGIRCQ). 3 disulfide bridges follow: Cys-45/Cys-58, Cys-53/Cys-69, and Cys-71/Cys-80. Asn-95 carries an N-linked (GlcNAc...) asparagine; by host glycan. A helical transmembrane segment spans residues 101 to 121 (IPSPGIVLVLLVSIIVCCLLF). Topologically, residues 122–140 (VYRFTRRTNKLPLQDMVVP) are cytoplasmic.

This sequence belongs to the orthopoxvirus OPG019 family. In terms of assembly, variola growth factor interacts with host EGFR and promotes EGFR dimerization.

Its subcellular location is the host membrane. It is found in the secreted. Stimulates cellular proliferation (hyperplasia)and mobility around infected cells to promote rapid and efficient spread of infection. This effect is beneficial for virus replication in vivo, because poxviruses replicate possibly better in proliferating cells than in quiescent cells. Acts by binding host EGFR, inducing its dimerization, autophosphorylation and leading to activation of several cellular pathways regulating cell proliferation or cell survival. The activation by host EGFR of mitogen activated protein kinases (MAPK) and extracellular-signal regulated kinases (ERK) are essential for the positive effect of vaccinia growth factor on poxvirus virulence in vivo. In Variola virus (isolate Human/India/Ind3/1967) (VARV), this protein is Pro-variola growth factor (OPG019).